A 266-amino-acid chain; its full sequence is Probable metal transport system membrane protein TP_0036 (266 aa).

The next 8 membrane-spanning stretches (helical) occupy residues 10–30 (AFVA…HLVL), 34–54 (ALMG…AVSC), 56–76 (IHPG…IEFL), 88–108 (LSIV…SGLI), 120–140 (ILVV…FCVG), 172–192 (VASV…GILV), 211–231 (FLLT…LGLV), and 238–258 (VAPG…VIAL).

The protein belongs to the ABC-3 integral membrane protein family.

It is found in the cell inner membrane. Its function is as follows. Part of an ATP-driven transport system TP_0034/TP_0035/TP_0036 for a metal. The protein is Probable metal transport system membrane protein TP_0036 of Treponema pallidum (strain Nichols).